The following is a 299-amino-acid chain: Type II restriction enzyme BglI (299 aa).

Mg(2+)-binding residues include Asp-116, Asp-142, and Ile-143.

Homodimer. Mg(2+) is required as a cofactor.

The enzyme catalyses Endonucleolytic cleavage of DNA to give specific double-stranded fragments with terminal 5'-phosphates.. Its function is as follows. A P subtype restriction enzyme that recognizes the double-stranded sequence 5'-GCCNNNNNGGC-3' and cleaves before N-8. This Bacillus subtilis protein is Type II restriction enzyme BglI (bglIR).